Reading from the N-terminus, the 102-residue chain is Acid shock protein (102 aa).

An N-terminal signal peptide occupies residues 1-21 (MKKVLALVVAAAMGLSSAAFA). The span at 22–41 (AETATTPAPTATTTKAAPAK) shows a compositional bias: low complexity. A propeptide spanning residues 22 to 58 (AETATTPAPTATTTKAAPAKTTHHKKQHKAAPAQKAQ) is cleaved from the precursor. The tract at residues 22–102 (AETATTPAPT…PAKPAAQPAA (81 aa)) is disordered. Residues 80 to 90 (AAKKHAGKHGH) are compositionally biased toward basic residues. Low complexity predominate over residues 91–102 (QQPAKPAAQPAA).

Belongs to the Asr family. In terms of processing, proteolytic processing gives rise to the active protein.

The protein localises to the periplasm. Functionally, required for growth and/or survival at acidic conditions. The chain is Acid shock protein from Shigella flexneri.